Reading from the N-terminus, the 221-residue chain is Histone H1C (221 aa).

2 stretches are compositionally biased toward low complexity: residues 1 to 11 (MTETAATETTP) and 27 to 44 (KKAA…PSAS). Disordered stretches follow at residues 1 to 44 (MTET…PSAS) and 123 to 221 (AKKK…AAKK). Positions 39 to 112 (SGPSASELIV…GASGSFKLNK (74 aa)) constitute an H15 domain. 2 stretches are compositionally biased toward basic residues: residues 123-150 (AKKK…KPKK) and 158-221 (SPKK…AAKK).

Belongs to the histone H1/H5 family.

The protein resides in the nucleus. It is found in the chromosome. Functionally, histones H1 are necessary for the condensation of nucleosome chains into higher-order structures. The polypeptide is Histone H1C (Xenopus laevis (African clawed frog)).